Reading from the N-terminus, the 461-residue chain is Argininosuccinate lyase (461 aa).

This sequence belongs to the lyase 1 family. Argininosuccinate lyase subfamily.

The protein localises to the cytoplasm. It catalyses the reaction 2-(N(omega)-L-arginino)succinate = fumarate + L-arginine. The protein operates within amino-acid biosynthesis; L-arginine biosynthesis; L-arginine from L-ornithine and carbamoyl phosphate: step 3/3. This chain is Argininosuccinate lyase, found in Laribacter hongkongensis (strain HLHK9).